The chain runs to 548 residues: C-type lectin domain family 4 member F (548 aa).

Residues 1 to 42 (MKEAELNRDMARYCTDNQCVSLQPQGLGPKSAALMAPRTLRH) are Cytoplasmic-facing. The helical; Signal-anchor for type II membrane protein transmembrane segment at 43–69 (VQVILALMVVTVIFSLLALFVVASQPW) threads the bilayer. Residues 70–548 (RPEWNKEPPS…STGWSAARVG (479 aa)) are Extracellular-facing. N-linked (GlcNAc...) asparagine glycans are attached at residues asparagine 86, asparagine 92, asparagine 115, asparagine 132, asparagine 209, and asparagine 255. In terms of domain architecture, C-type lectin spans 438–538 (KFCTSQGAHL…GSSYPWVCKK (101 aa)). 2 disulfides stabilise this stretch: cysteine 440/cysteine 536 and cysteine 516/cysteine 528.

In terms of tissue distribution, kupffer cells.

It is found in the membrane. Receptor with an affinity for galactose and fucose. Could be involved in endocytosis. This is C-type lectin domain family 4 member F (Clec4f) from Mus musculus (Mouse).